Consider the following 750-residue polypeptide: Photosystem I P700 chlorophyll a apoprotein A1 (750 aa).

A run of 8 helical transmembrane segments spans residues 70–93 (VFSA…FHGA), 156–179 (LYST…FHYH), 195–219 (LNHH…HVSL), 291–309 (TAHH…GHMY), 346–369 (WHAQ…HHMY), 385–411 (LSLF…IFMV), 433–455 (AIIS…LYIH), and 531–549 (FLVH…LILL). 2 residues coordinate [4Fe-4S] cluster: cysteine 573 and cysteine 582. Helical transmembrane passes span 589–610 (HVFL…HFSW) and 664–686 (LSAY…MFLF). Histidine 675 contributes to the chlorophyll a' binding site. 2 residues coordinate chlorophyll a: methionine 683 and tyrosine 691. Tryptophan 692 provides a ligand contact to phylloquinone. The helical transmembrane segment at 724–744 (AVGVAHYLLGGIATTWAFFLA) threads the bilayer.

Belongs to the PsaA/PsaB family. The PsaA/B heterodimer binds the P700 chlorophyll special pair and subsequent electron acceptors. PSI consists of a core antenna complex that captures photons, and an electron transfer chain that converts photonic excitation into a charge separation. The eukaryotic PSI reaction center is composed of at least 11 subunits. The cofactor is P700 is a chlorophyll a/chlorophyll a' dimer, A0 is one or more chlorophyll a, A1 is one or both phylloquinones and FX is a shared 4Fe-4S iron-sulfur center..

Its subcellular location is the plastid. The protein localises to the chloroplast thylakoid membrane. It carries out the reaction reduced [plastocyanin] + hnu + oxidized [2Fe-2S]-[ferredoxin] = oxidized [plastocyanin] + reduced [2Fe-2S]-[ferredoxin]. Functionally, psaA and PsaB bind P700, the primary electron donor of photosystem I (PSI), as well as the electron acceptors A0, A1 and FX. PSI is a plastocyanin-ferredoxin oxidoreductase, converting photonic excitation into a charge separation, which transfers an electron from the donor P700 chlorophyll pair to the spectroscopically characterized acceptors A0, A1, FX, FA and FB in turn. Oxidized P700 is reduced on the lumenal side of the thylakoid membrane by plastocyanin. This Marchantia polymorpha (Common liverwort) protein is Photosystem I P700 chlorophyll a apoprotein A1.